The primary structure comprises 874 residues: Interleukin-12 receptor subunit beta-2 (874 aa).

An N-terminal signal peptide occupies residues 1 to 23 (MAQTVRECSLALLFLFMWLLIKA). Residues 24 to 637 (NIDVCKLGTV…REFCPQGKAN (614 aa)) are Extracellular-facing. N48, N101, N114, N142, N151, N169, N179, N224, N252, N279, N287, N323, N391, and N495 each carry an N-linked (GlcNAc...) asparagine glycan. Fibronectin type-III domains follow at residues 139 to 237 (PPQN…FLDI), 242 to 335 (PPWD…TPEE), 336 to 430 (EPVG…NIVD), 438 to 530 (APHQ…IRGD), and 536 to 635 (PVSG…PQGK). Residues 321–325 (WSNWS) carry the WSXWS motif motif. The chain crosses the membrane as a helical span at residues 638–658 (WKAFVISSICIAIITVGTFSI). The Cytoplasmic portion of the chain corresponds to 659-874 (RYFRQKAFTL…GYDSLMSNEA (216 aa)). The Box 1 motif motif lies at 677–685 (YSRTIPDPA). Phosphotyrosine is present on residues Y757, Y804, and Y811.

This sequence belongs to the type I cytokine receptor family. Type 2 subfamily. Heterodimer/heterooligomer; disulfide-linked. The functional high affinity IL12 receptor is composed of I12RB1 and IL12RB2. Il12RB2 binds JAK2 (via its N-terminal) through a membrane-proximal region of the cytoplasmic domain. In terms of processing, on IL12 stimulation, phosphorylated on C-terminal tyrosine residues. Phosphorylation of any one of Tyr-757, Tyr-804 or Tyr-811 can activate STAT4, IFN-gamma production, and T-cell proliferation. Tyr-811 is the dominant site of cell proliferation. Expressed in developing T-helper (TH) cells.

The protein resides in the membrane. Functionally, receptor for interleukin-12. This subunit is the signaling component coupling to the JAK2/STAT4 pathway. Promotes the proliferation of T-cells as well as NK cells. Induces the promotion of T-cells towards the Th1 phenotype by strongly enhancing IFN-gamma production. Can also activate STAT3. The polypeptide is Interleukin-12 receptor subunit beta-2 (Il12rb2) (Mus musculus (Mouse)).